The following is a 335-amino-acid chain: UPF0353 protein MLBr01808 (335 aa).

2 helical membrane-spanning segments follow: residues 18–38 and 67–87; these read WFFL…MMQV and VPAI…AGPT. Positions 98 to 294 constitute a VWFA domain; sequence VVMLVIDVSQ…AELKAVYASL (197 aa). A helical transmembrane segment spans residues 309 to 329; that stretch reads AGWLRLGVLVLALAALTALLI.

The protein belongs to the UPF0353 family.

It localises to the cell membrane. This is UPF0353 protein MLBr01808 from Mycobacterium leprae (strain Br4923).